Here is a 416-residue protein sequence, read N- to C-terminus: UDP-N-acetylmuramoylalanine--D-glutamate ligase (416 aa).

ATP is bound at residue 104-110 (GSNGKST).

It belongs to the MurCDEF family.

The protein localises to the cytoplasm. It carries out the reaction UDP-N-acetyl-alpha-D-muramoyl-L-alanine + D-glutamate + ATP = UDP-N-acetyl-alpha-D-muramoyl-L-alanyl-D-glutamate + ADP + phosphate + H(+). Its pathway is cell wall biogenesis; peptidoglycan biosynthesis. Functionally, cell wall formation. Catalyzes the addition of glutamate to the nucleotide precursor UDP-N-acetylmuramoyl-L-alanine (UMA). The sequence is that of UDP-N-acetylmuramoylalanine--D-glutamate ligase from Francisella tularensis subsp. holarctica (strain FTNF002-00 / FTA).